Consider the following 307-residue polypeptide: Serine/threonine-protein phosphatase PP2A-3 catalytic subunit (307 aa).

Asp-55, His-57, Asp-83, and Asn-115 together coordinate Mn(2+). His-116 functions as the Proton donor in the catalytic mechanism. Residues His-165 and His-239 each coordinate Mn(2+).

It belongs to the PPP phosphatase family. PP-2A subfamily. Mn(2+) is required as a cofactor.

It localises to the cytoplasm. It catalyses the reaction O-phospho-L-seryl-[protein] + H2O = L-seryl-[protein] + phosphate. It carries out the reaction O-phospho-L-threonyl-[protein] + H2O = L-threonyl-[protein] + phosphate. The chain is Serine/threonine-protein phosphatase PP2A-3 catalytic subunit (PP2A3) from Oryza sativa subsp. indica (Rice).